The primary structure comprises 1274 residues: Myosin-binding protein C, cardiac-type (1274 aa).

M1 carries the N-acetylmethionine modification. Residues 8-95 (PVSAFTKKPR…SKVKFDLKVT (88 aa)) enclose the Ig-like C2-type 1 domain. Position 47 is a phosphoserine (S47). Residues 95–104 (TEPAPPEKAE) are compositionally biased toward basic and acidic residues. Residues 95-153 (TEPAPPEKAESAVAPTSMEAPETPKEVPALATQLEGNVSSPEGSVSVTQDGSVAGSQGA) are disordered. Position 117 is a phosphothreonine (T117). Residues 128 to 149 (LEGNVSSPEGSVSVTQDGSVAG) are compositionally biased toward polar residues. Residues 157-259 (PIGLFLMRPQ…KFDSCNFNLT (103 aa)) enclose the Ig-like C2-type 2 domain. Zn(2+) is bound by residues Q212, H214, E227, and H229. S279 carries the phosphoserine modification. T287 is modified (phosphothreonine; by PKA and PKC). A Phosphoserine modification is found at S288. S307 bears the Phosphoserine; by PKA mark. 2 positions are modified to phosphoserine: S312 and S427. Ig-like C2-type domains are found at residues 361–452 (KKST…VKEP) and 452–546 (PPVL…KKLE). C436 and C443 are disulfide-bonded. A phosphoserine mark is found at S459 and S550. T607 bears the Phosphothreonine mark. An Ig-like C2-type 5 domain is found at 645–765 (PKIHLDCPGS…PVGEDQVNLT (121 aa)). Fibronectin type-III domains lie at 774 to 870 (APAA…IGPP) and 872 to 967 (EPTH…VQEI). Residues 971–1059 (PRLQLPRHLR…ENMEDKATLV (89 aa)) form the Ig-like C2-type 6 domain. Positions 1068-1163 (PPLDIRVVET…TKEPIFIPRP (96 aa)) constitute a Fibronectin type-III 3 domain. Residues 1181–1269 (PSFTQPLTNR…GEAQCECRLE (89 aa)) form the Ig-like C2-type 7 domain. R1241 bears the Omega-N-methylarginine mark.

It belongs to the immunoglobulin superfamily. MyBP family. In terms of processing, substrate for phosphorylation by PKA and PKC. Reversible phosphorylation appears to modulate contraction. Post-translationally, polyubiquitinated.

Its function is as follows. Thick filament-associated protein located in the crossbridge region of vertebrate striated muscle a bands. In vitro it binds MHC, F-actin and native thin filaments, and modifies the activity of actin-activated myosin ATPase. It may modulate muscle contraction or may play a more structural role. This chain is Myosin-binding protein C, cardiac-type (Mybpc3), found in Rattus norvegicus (Rat).